Reading from the N-terminus, the 92-residue chain is MNPAIVVIIVLLVAALLIWACKAKKLDGLFNFGDPYYTSTVTPSVSPTTVLVTPPVPAAYPMYDVNYRYPFGVPWDIDVDRRRRYNWGRWRR.

A signal peptide spans Met-1 to Ala-23.

This is an uncharacterized protein from Acheta domesticus (House cricket).